A 227-amino-acid polypeptide reads, in one-letter code: Protein lin-28 (227 aa).

Polar residues predominate over residues 1-17; it reads MSTVVSEGRNDGNNRYS. Residues 1 to 27 are disordered; it reads MSTVVSEGRNDGNNRYSPQDEVEDRLP. Positions 52 to 120 constitute a CSD domain; that stretch reads RYFGSCKWFN…GREAYAVSGE (69 aa). CCHC-type zinc fingers lie at residues 143–160 and 166–183; these read RCFR…SCPN and KVCY…ICPE. 8 residues coordinate Zn(2+): cysteine 144, cysteine 147, histidine 153, cysteine 158, cysteine 168, cysteine 171, histidine 176, and cysteine 181. The segment at 181–227 is disordered; the sequence is CPERRRKHRPEQVAAEEAEAARMAAEKSSPTTSDDDIREKNSNSSDE.

It belongs to the lin-28 family. As to quaternary structure, component of a complex at least containing lep-2, lin-28 and the long non-coding RNA lep-5, which mediates the degradation of lin-28. Post-translationally, cleavage by caspase ced-3 during larval development probably induces lin-28 degradation.

The protein resides in the cytoplasm. Heterochronic protein which controls the choice of stage specific cell fates. Regulates the timing of the second larval stage events (L2 events) in the hypodermis. May negatively regulate the larval to adult transition via the suppression of the microRNA (miRNA) let-7 during L3. Through this regulatory role, controls the timing of the sexual maturation of the nervous system. Also has a role in the fox-1-sex-1-mediated determination of sexual fate. Plays a role in governing the developmental timing of male tail tip morphogenesis. Plays a role in controlling the seam cell number during larval stages. Plays a role in vulval development. In Caenorhabditis elegans, this protein is Protein lin-28.